Consider the following 488-residue polypeptide: Beta-1,3-glucan-binding protein (488 aa).

Positions 1 to 17 (MFVTFICFLACLTCSYG) are cleaved as a signal peptide. Positions 18–135 (QPRAQQYVVP…GTPADTSLEP (118 aa)) are binds to curdlan, laminarihexaose and laminarin. The complex formation with laminarin induces self-association of the complexes into a macro structure, likely containing six protein and three laminarin molecules. The macro structures may form a platform on a microbial surface for recruitment of downstream proteases, as a means of amplification of the initial signal of pathogen recognition for the activation of the phenoloxidase cascade. The binds to curdlan, lipopolysaccharide and lipoteichoic acid, activates the phenoloxidase cascade and is resistant to proteolytic degradation by trypsin or chymotrypsin, but is not as effective as the full-length protein in aggregation of microorganisms stretch occupies residues 18-198 (QPRAQQYVVP…LKDLANWEAE (181 aa)). A CBM39 domain is found at 24–123 (YVVPSAKLEA…GEWTVTEFVN (100 aa)). Positions 24–127 (YVVPSAKLEA…VTEFVNEDGT (104 aa)) are binds to laminarihexaose and laminarin. Residues D72, 99–101 (WTY), and R110 contribute to the substrate site. A disordered region spans residues 125–158 (DGTPADTSLEPTTAPTPVRPDQPNQPIPTHRPDP). The segment covering 129–139 (ADTSLEPTTAP) has biased composition (polar residues). A compositionally biased stretch (pro residues) spans 141–150 (PVRPDQPNQP). The region spanning 144-488 (PDQPNQPIPT…KVDYVRVYAL (345 aa)) is the GH16 domain. A binds to laminarin, but not to curdlan, does not activate the phenoloxidase cascade, is susceptible to proteinase digestion by trypsin or chymotrypsin and does not cause aggregation of microorganisms region spans residues 199–488 (VKFPEEPDYP…KVDYVRVYAL (290 aa)). N-linked (GlcNAc...) asparagine glycosylation is found at N373 and N453.

It belongs to the insect beta-1,3-glucan binding protein family. In terms of assembly, monomer. The N-terminus is blocked. In terms of tissue distribution, fat body and hemolymph.

The protein localises to the secreted. Its function is as follows. Involved in the recognition of invading microorganisms causing their aggregation. Activates the phenoloxidase cascade. Binds specifically to beta-1,3-glucan. Binds to curdlan, a linear water-insoluble beta-1,3-glucan polysaccharide, and to laminarin, a water-soluble beta-1,3-glucan polysaccharide containing beta-1,6 branches. Also binds to lipopolysaccharide and lipoteichoic acid. The polypeptide is Beta-1,3-glucan-binding protein (Plodia interpunctella (Indianmeal moth)).